An 893-amino-acid chain; its full sequence is Sperm-associated antigen 1 (893 aa).

The segment covering 112-126 has biased composition (basic and acidic residues); sequence ENTRHFHDPEKHPGV. Residues 112-155 form a disordered region; that stretch reads ENTRHFHDPEKHPGVEDPLPPVRGSNSCPRGGKETSSKSKTAKK. TPR repeat units follow at residues 213-246, 247-279, and 280-313; these read ANRE…LPTA, TAYN…EPGN, and IKAL…EPDN. Disordered regions lie at residues 324-344, 349-368, and 373-437; these read EREL…KRMV, ENSG…DDGV, and MGNI…SRGN. Ser-351 is modified (phosphoserine). Positions 403–415 are enriched in polar residues; sequence QEGQPETGTASTS. The span at 416-437 shows a compositional bias: basic and acidic residues; it reads DNHDLEERRAADSPGDLKSRGN. TPR repeat units follow at residues 429-463, 471-504, 506-538, 605-638, and 639-672; these read PGDL…EPTG, SILY…QPFA, KPLL…DCRI, FQAL…NSKA, and CAIY…DSKN. Residue 630–637 coordinates GTP; sequence ECLKINSK. Ser-703 carries the post-translational modification Phosphoserine. The disordered stretch occupies residues 704–756; it reads PDSSEAARHLDTKNDTAPPSRERERRRIEIQEVDDSSDEEPERPAEASAVEEG. The segment covering 708–733 has biased composition (basic and acidic residues); that stretch reads EAARHLDTKNDTAPPSRERERRRIEI. Positions 734-744 are enriched in acidic residues; the sequence is QEVDDSSDEEP. A phosphoserine mark is found at Ser-739, Ser-740, and Ser-758.

As to expression, testis and sperm.

Its subcellular location is the cytoplasm. It localises to the dynein axonemal particle. Its function is as follows. May play a role in the cytoplasmic assembly of the ciliary dynein arms. Binds GTP and has GTPase activity. Plays a role in fertilization. The chain is Sperm-associated antigen 1 (Spag1) from Rattus norvegicus (Rat).